The following is a 239-amino-acid chain: tRNA (guanine-N(1)-)-methyltransferase (239 aa).

Residues Gly113 and 133–138 (IGDYVL) contribute to the S-adenosyl-L-methionine site. The disordered stretch occupies residues 218-239 (ERRPDLWAARATQNPPERKTNG).

Belongs to the RNA methyltransferase TrmD family. In terms of assembly, homodimer.

Its subcellular location is the cytoplasm. The catalysed reaction is guanosine(37) in tRNA + S-adenosyl-L-methionine = N(1)-methylguanosine(37) in tRNA + S-adenosyl-L-homocysteine + H(+). Its function is as follows. Specifically methylates guanosine-37 in various tRNAs. This Nitrobacter winogradskyi (strain ATCC 25391 / DSM 10237 / CIP 104748 / NCIMB 11846 / Nb-255) protein is tRNA (guanine-N(1)-)-methyltransferase.